We begin with the raw amino-acid sequence, 125 residues long: Large ribosomal subunit protein bL12 (125 aa).

It belongs to the bacterial ribosomal protein bL12 family. In terms of assembly, homodimer. Part of the ribosomal stalk of the 50S ribosomal subunit. Forms a multimeric L10(L12)X complex, where L10 forms an elongated spine to which 2 to 4 L12 dimers bind in a sequential fashion. Binds GTP-bound translation factors.

Forms part of the ribosomal stalk which helps the ribosome interact with GTP-bound translation factors. Is thus essential for accurate translation. This Parabacteroides distasonis (strain ATCC 8503 / DSM 20701 / CIP 104284 / JCM 5825 / NCTC 11152) protein is Large ribosomal subunit protein bL12.